The chain runs to 1184 residues: PR domain zinc finger protein 10 (1184 aa).

The disordered stretch occupies residues 122–162; it reads LDAKEEEEEEEDEDEDTEEEEEEDAEDTDVDDWQPDPPRPF. Residues 125-155 show a composition bias toward acidic residues; the sequence is KEEEEEEEDEDEDTEEEEEEDAEDTDVDDWQ. Residues 202-320 enclose the SET domain; it reads LPLVLYIDRF…PKQELKVWYA (119 aa). The segment at 221 to 325 is N-terminal PR domain; essential for transcriptional activator activity; it reads IPKRTQFGPV…KVWYAASYAE (105 aa). The C2H2-type 1 zinc-finger motif lies at 349–371; that stretch reads WPCYECNRRFISSEQLQQHLNSH. Lysine 374 participates in a covalent cross-link: Glycyl lysine isopeptide (Lys-Gly) (interchain with G-Cter in SUMO2). Basic residues predominate over residues 381-401; that stretch reads TRGRGRGRGKRRFGPGRRPGR. The tract at residues 381–405 is disordered; sequence TRGRGRGRGKRRFGPGRRPGRPPKF. Serine 418 bears the Phosphoserine mark. At threonine 422 the chain carries Phosphothreonine. A disordered region spans residues 444–487; that stretch reads GLDQPEQASIPIPQLPQETPPSLEQEPETHTLHLQPQQEESLVP. Residues 475-487 are compositionally biased toward polar residues; sequence LHLQPQQEESLVP. 8 consecutive C2H2-type zinc fingers follow at residues 520–542, 550–572, 578–600, 606–629, 634–656, 662–685, 717–740, and 850–873; these read FKCL…LRFH, LTCD…MKLH, YSCI…VAIH, FTCP…RSFH, YQCT…MLRH, FLCS…QRMH, FKCR…SKRH, and VCCP…RKKH. The tract at residues 917–1164 is C-terminal glutamine-rich region; essential for transcriptional activator activity; the sequence is QAMTELSQTL…TGPSQQQTTQ (248 aa). A disordered region spans residues 1004–1054; that stretch reads EPAPAAPSASQVAGQPLSPSAQQVQQGLSPSHIQGSSSTQGQALQQQQNSS. Residues 1014–1036 show a composition bias toward polar residues; sequence QVAGQPLSPSAQQVQQGLSPSHI. Over residues 1037–1054 the composition is skewed to low complexity; sequence QGSSSTQGQALQQQQNSS.

The protein belongs to the class V-like SAM-binding methyltransferase superfamily. Present in brain, liver, kidney, spleen and thymus (at protein level).

Its subcellular location is the nucleus. In terms of biological role, transcriptional activator, essential for early embryonic development and survival of embryonic stem cells (ESCs). Supports cell growth and survival during early development by transcriptionally activating the expression of the translation initiation factor EIF3B, to sustain global translation. Activates the transcription of FLNC. This is PR domain zinc finger protein 10 (Prdm10) from Mus musculus (Mouse).